We begin with the raw amino-acid sequence, 193 residues long: Probable GTP-binding protein EngB (193 aa).

An EngB-type G domain is found at 20-193; it reads GVPEVAFAGR…ELAHEISRCI (174 aa). GTP is bound by residues 28–35, 55–59, 73–76, 140–143, and 171–176; these read GRSNVGKS, GSTRQ, DLPG, TKAD, and IMWVSS. Serine 35 and threonine 57 together coordinate Mg(2+).

Belongs to the TRAFAC class TrmE-Era-EngA-EngB-Septin-like GTPase superfamily. EngB GTPase family. Mg(2+) is required as a cofactor.

In terms of biological role, necessary for normal cell division and for the maintenance of normal septation. The sequence is that of Probable GTP-binding protein EngB from Anaplasma phagocytophilum (strain HZ).